The primary structure comprises 2241 residues: Large tegument protein deneddylase (2241 aa).

The deubiquitination activity stretch occupies residues 1-238; the sequence is MKVTQASCHQ…IDLTGVVRES (238 aa). Residues 4–226 form the Peptidase C76 domain; it reads TQASCHQGDI…AARLVSTYRD (223 aa). Active-site residues include cysteine 24, aspartate 160, and histidine 162. A disordered region spans residues 239–314; that stretch reads ADTAATTTTA…STTSKTLATA (76 aa). The segment covering 240–250 has biased composition (low complexity); sequence DTAATTTTAAP. Residues 251–268 show a composition bias toward pro residues; it reads SLPPLPDPIVDPGCPPGV. Residues 304–314 are compositionally biased toward low complexity; that stretch reads PSTTSKTLATA. Positions 327 to 331 are interaction with inner tegument protein; sequence SSAVP. The segment at 1170–1229 is disordered; it reads RSSQQKMEEQLQETRQQMTETSERLDRSLRQDPGSSSVTRVPEKPFKGQELAGRITPPPA. A compositionally biased stretch (basic and acidic residues) spans 1190-1199; that stretch reads TSERLDRSLR.

The protein belongs to the herpesviridae large tegument protein family. As to quaternary structure, interacts with host CUL1 and CUL4A; these interactions inhibit the E3 ligase activity of cullins. Interacts with inner tegument protein. Interacts with capsid vertex specific component CVC2. Interacts with the major capsid protein/MCP.

Its subcellular location is the virion tegument. The protein resides in the host cytoplasm. The protein localises to the host nucleus. It catalyses the reaction Thiol-dependent hydrolysis of ester, thioester, amide, peptide and isopeptide bonds formed by the C-terminal Gly of ubiquitin (a 76-residue protein attached to proteins as an intracellular targeting signal).. Its function is as follows. Large tegument protein that plays multiple roles in the viral cycle. During viral entry, remains associated with the capsid while most of the tegument is detached and participates in the capsid transport toward the host nucleus. Plays a role in the routing of the capsid at the nuclear pore complex and subsequent uncoating. Within the host nucleus, acts as a deneddylase and promotes the degradation of nuclear CRLs (cullin-RING ubiquitin ligases) and thereby stabilizes nuclear CRL substrates, while cytoplasmic CRLs remain unaffected. These modifications prevent host cell cycle S-phase progression and create a favorable environment allowing efficient viral genome replication. Participates later in the secondary envelopment of capsids. Indeed, plays a linker role for the association of the outer viral tegument to the capsids together with the inner tegument protein. The sequence is that of Large tegument protein deneddylase (UL48) from Human cytomegalovirus (strain AD169) (HHV-5).